The following is a 286-amino-acid chain: E3 ubiquitin-protein ligase RNF170 (286 aa).

Topologically, residues 1–52 (MQRYWRFQDNKIQDICFGVLGESWIQRPVMARYYSEGQSLQQDDSFIEGVSD) are lumenal. A helical transmembrane segment spans residues 53–73 (QVLVAVVVSLALTATLLYALL). Residues 74–229 (RNVQQNIHPE…GGLFWMFRIR (156 aa)) lie on the Cytoplasmic side of the membrane. The RING-type zinc-finger motif lies at 115-158 (CPICLHQASFPVETNCGHLFCGSCIIAYWRYGSWLGAISCPICR). The chain crosses the membrane as a helical span at residues 230-250 (IMLCLMGAFFYLISPLDFVPE). A topological domain (lumenal) is located at residue Ala-251. A helical membrane pass occupies residues 252 to 272 (LFGILGFLDDFFVIFLLLIYI). Topologically, residues 273-286 (SIMYREVITQRLTR) are cytoplasmic.

Constitutively associated with the ERLIN1/ERLIN 2 complex. Interacts with activated ITPR1.

Its subcellular location is the endoplasmic reticulum membrane. It catalyses the reaction S-ubiquitinyl-[E2 ubiquitin-conjugating enzyme]-L-cysteine + [acceptor protein]-L-lysine = [E2 ubiquitin-conjugating enzyme]-L-cysteine + N(6)-ubiquitinyl-[acceptor protein]-L-lysine.. It participates in protein modification; protein ubiquitination. In terms of biological role, E3 ubiquitin-protein ligase that plays an essential role in stimulus-induced inositol 1,4,5-trisphosphate receptor type 1 (ITPR1) ubiquitination and degradation via the endoplasmic reticulum-associated degradation (ERAD) pathway. Also involved in ITPR1 turnover in resting cells. Selectively inhibits the TLR3-triggered innate immune response by promoting the 'Lys-48'-linked polyubiquitination and degradation of TLR3. In Mus musculus (Mouse), this protein is E3 ubiquitin-protein ligase RNF170 (Rnf170).